The sequence spans 75 residues: Small ribosomal subunit protein bS18 (75 aa).

It belongs to the bacterial ribosomal protein bS18 family. As to quaternary structure, part of the 30S ribosomal subunit. Forms a tight heterodimer with protein bS6.

Functionally, binds as a heterodimer with protein bS6 to the central domain of the 16S rRNA, where it helps stabilize the platform of the 30S subunit. The chain is Small ribosomal subunit protein bS18 from Buchnera aphidicola subsp. Baizongia pistaciae (strain Bp).